The sequence spans 412 residues: Inositol polyphosphate-5-phosphatase A (412 aa).

Residue Cys409 is the site of S-farnesyl cysteine attachment. The propeptide at 410–412 (VVQ) is removed in mature form.

It belongs to the inositol 1,4,5-trisphosphate 5-phosphatase type I family. In terms of assembly, interacts with TASOR. Post-translationally, isoprenylation at Cys-409 is required for localization at the membrane.

It is found in the cell membrane. The protein resides in the cell projection. The protein localises to the dendrite. It carries out the reaction 1D-myo-inositol 1,4,5-trisphosphate + H2O = 1D-myo-inositol 1,4-bisphosphate + phosphate. It catalyses the reaction 1D-myo-inositol 1,3,4,5-tetrakisphosphate + H2O = 1D-myo-inositol 1,3,4-trisphosphate + phosphate. With respect to regulation, inhibited by EDTA and 2,3-bisphosphoglycerate. Phosphatase that specifically hydrolyzes the 5-phosphate of inositol 1,4,5-trisphosphate to inositol 1,4-bisphosphate, and inositol 1,3,4,5-tetrasphosphate to inositol 1,3,4-trisphosphate. Plays a crucial role in the survival of cerebellar Purkinje cells. The chain is Inositol polyphosphate-5-phosphatase A (INPP5A) from Canis lupus familiaris (Dog).